We begin with the raw amino-acid sequence, 218 residues long: ATP-dependent dethiobiotin synthetase BioD (218 aa).

10-15 contacts ATP; the sequence is NAGKTT. Threonine 14 is a binding site for Mg(2+). Residue lysine 35 is part of the active site. Threonine 39 contacts substrate. Mg(2+) contacts are provided by histidine 52 and glutamate 116. ATP contacts are provided by residues 116–119 and 176–177; these read EGAG and LR.

This sequence belongs to the dethiobiotin synthetase family. As to quaternary structure, homodimer. Requires Mg(2+) as cofactor.

Its subcellular location is the cytoplasm. It carries out the reaction (7R,8S)-7,8-diammoniononanoate + CO2 + ATP = (4R,5S)-dethiobiotin + ADP + phosphate + 3 H(+). It participates in cofactor biosynthesis; biotin biosynthesis; biotin from 7,8-diaminononanoate: step 1/2. Functionally, catalyzes a mechanistically unusual reaction, the ATP-dependent insertion of CO2 between the N7 and N8 nitrogen atoms of 7,8-diaminopelargonic acid (DAPA, also called 7,8-diammoniononanoate) to form a ureido ring. The protein is ATP-dependent dethiobiotin synthetase BioD of Helicobacter pylori (strain Shi470).